The primary structure comprises 212 residues: 3-isopropylmalate dehydratase small subunit (212 aa).

This sequence belongs to the LeuD family. LeuD type 1 subfamily. In terms of assembly, heterodimer of LeuC and LeuD.

The catalysed reaction is (2R,3S)-3-isopropylmalate = (2S)-2-isopropylmalate. It functions in the pathway amino-acid biosynthesis; L-leucine biosynthesis; L-leucine from 3-methyl-2-oxobutanoate: step 2/4. Functionally, catalyzes the isomerization between 2-isopropylmalate and 3-isopropylmalate, via the formation of 2-isopropylmaleate. This is 3-isopropylmalate dehydratase small subunit from Pseudomonas aeruginosa (strain UCBPP-PA14).